The primary structure comprises 138 residues: SPbeta prophage-derived uncharacterized protein YopJ (138 aa).

The polypeptide is SPbeta prophage-derived uncharacterized protein YopJ (yopJ) (Bacillus subtilis (strain 168)).